Here is a 209-residue protein sequence, read N- to C-terminus: MSTYPIIIGVAGGSASGKTSVAQAILQRVGADRIAHIDHDRYYKDLSHLPLEERAKFNFDHPDALDNDLLVAHLDALCAGQSVDLPTYDYATYVRLPQTERIEPRPVILVEGILIFYEPVLRRRMQIKLFVDTDADLRFIRRLRRDIVERGRSVESVIEQYLATVRPMHLEFVEPTKRYADVIFPGGGRNPIAIDMVVARIEAALQATP.

ATP is bound at residue 12–19 (GGSASGKT).

This sequence belongs to the uridine kinase family.

The protein resides in the cytoplasm. It catalyses the reaction uridine + ATP = UMP + ADP + H(+). The enzyme catalyses cytidine + ATP = CMP + ADP + H(+). Its pathway is pyrimidine metabolism; CTP biosynthesis via salvage pathway; CTP from cytidine: step 1/3. The protein operates within pyrimidine metabolism; UMP biosynthesis via salvage pathway; UMP from uridine: step 1/1. The sequence is that of Uridine kinase from Chloroflexus aurantiacus (strain ATCC 29366 / DSM 635 / J-10-fl).